A 469-amino-acid polypeptide reads, in one-letter code: DENN domain-containing protein 2D (469 aa).

Residues 17–44 form a disordered region; that stretch reads LPRLRAGQSQNNPGEAVTEPERIQEHSP. The region spanning 55-204 is the uDENN domain; the sequence is EYLLVVSLKK…AFPAPGKTVT (150 aa). Positions 226 to 359 constitute a cDENN domain; the sequence is HLEHVDFSVL…LQDDILDSLG (134 aa). A dDENN domain is found at 361-445; it reads GINELKTSEQ…QEAEKSRNPP (85 aa).

The protein localises to the cytoplasm. Guanine nucleotide exchange factor (GEF) which may activate RAB9A and RAB9B. Promotes the exchange of GDP to GTP, converting inactive GDP-bound Rab proteins into their active GTP-bound form. The chain is DENN domain-containing protein 2D (Dennd2d) from Mus musculus (Mouse).